The sequence spans 343 residues: Protein SOSEKI 4 (343 aa).

The DIX-like oligomerization domain stretch occupies residues 18–109 (RIVPVVYYLS…YVLKGSQILD (92 aa)). The disordered stretch occupies residues 148 to 194 (RKLSMDASTQTDDRRRRKSPVDEVNEVTELSREEITSPPQSDSSPET). Over residues 184 to 194 (SPPQSDSSPET) the composition is skewed to polar residues. The short motif at 233-234 (CG) is the Association to cell membranes element.

It belongs to the SOSEKI family. In terms of assembly, homodimer. Forms long polymer filaments with other SOKs proteins polymers (e.g. SOK1, SOK2, SOK3 and SOK4) crucial for polar localization and biological activity. Binds to ANGUSTIFOLIA (AN). In terms of tissue distribution, expressed during embryogenesis and in roots.

It localises to the cell membrane. SOSEKI proteins (SOK1-5) locally interpret global polarity cues and can influence cell division orientation to coordinate cell polarization relative to body axes, probably by guiding ANGUSTIFOLIA (AN) polarized localization. Positive regulator of auxin (indole-3-acetic acid, IAA) biosynthesis and signaling pathway leading to the modulation of seedling growth, plant and inflorescence development. Negative regulator of stress responses (e.g. salinity and osmotic stress). This is Protein SOSEKI 4 from Arabidopsis thaliana (Mouse-ear cress).